Here is a 199-residue protein sequence, read N- to C-terminus: MIRFILDTSIFVNPDVRKKFGNTPTEAMKTFLKYAEKLFGKVEFYMPPGIYKEVKNFLEDIPPEMELYIIKKPPNVHDIKIPAFVVYELIEDIRRRVDKGLRVAEKAVRESVIDTNNVDKIIQKLRRNYRKALREGIVDSTEDFELILLAKEIDGIIVSADVGILTWAEKMGIKWVDAFKFKELLDELVEKVESEKERK.

It belongs to the HARP family.

The enzyme catalyses Endonucleolytic cleavage of RNA, removing 5'-extranucleotides from tRNA precursor.. RNA-free RNase P that catalyzes the removal of the 5'-leader sequence from pre-tRNA to produce the mature 5'-terminus. The protein is RNA-free ribonuclease P of Pyrococcus furiosus (strain ATCC 43587 / DSM 3638 / JCM 8422 / Vc1).